A 233-amino-acid chain; its full sequence is Chalcone--flavanone isomerase (233 aa).

Positions 47, 113, and 192 each coordinate substrate.

This sequence belongs to the chalcone isomerase family.

The catalysed reaction is a chalcone = a flavanone.. Its pathway is secondary metabolite biosynthesis; flavonoid biosynthesis. Catalyzes the intramolecular cyclization of bicyclic chalcones into tricyclic (S)-flavanones. Responsible for the isomerization of 4,2',4',6'-tetrahydroxychalcone (also termed chalcone) into naringenin. The polypeptide is Chalcone--flavanone isomerase (CHI) (Oryza sativa subsp. japonica (Rice)).